A 316-amino-acid polypeptide reads, in one-letter code: Small ribosomal subunit protein RACK1 (316 aa).

7 WD repeats span residues 4-46 (QMTL…WRLT), 52-93 (YGVP…WDLS), 94-135 (TGQT…WNTL), 137-180 (VCKY…WNLT), 181-221 (NCKL…LWDL), 222-263 (NEGK…WDLE), and 264-312 (GKVV…WQVS).

Belongs to the WD repeat G protein beta family. Ribosomal protein RACK1 subfamily.

The polypeptide is Small ribosomal subunit protein RACK1 (Biomphalaria glabrata (Bloodfluke planorb)).